The following is a 552-amino-acid chain: Phosphoglucomutase (552 aa).

Serine 143 functions as the Phosphoserine intermediate in the catalytic mechanism. Mg(2+) contacts are provided by serine 143, aspartate 295, aspartate 297, and aspartate 299.

It belongs to the phosphohexose mutase family. The cofactor is Mg(2+).

The enzyme catalyses alpha-D-glucose 1-phosphate = alpha-D-glucose 6-phosphate. It participates in glycolipid metabolism; diglucosyl-diacylglycerol biosynthesis. Functionally, catalyzes the interconversion between glucose-6-phosphate and alpha-glucose-1-phosphate. This is the first step in the biosynthesis of diglucosyl-diacylglycerol (Glc2-DAG), i.e. the predominant glycolipid found in the S.aureus membrane, which is also used as a membrane anchor for lipoteichoic acid (LTA). This is Phosphoglucomutase (pgcA) from Staphylococcus aureus (strain Mu50 / ATCC 700699).